The following is a 196-amino-acid chain: SAGA-associated factor 11 homolog (196 aa).

Residues 1-22 form a disordered region; the sequence is MSAANMPTTTGAQGSGNQVPTT. The SGF11-type zinc-finger motif lies at 106 to 127; sequence CTCPNCDRLVAAARFAPHLEKC. Positions 144–196 are disordered; it reads TKEGASSAHLHSAGNAGGTDDEDDVDWSSDKRRKKSNQNSRNNGSKKNNGKTF. Phosphoserine is present on serine 172. Low complexity predominate over residues 180–196; that stretch reads NQNSRNNGSKKNNGKTF.

Belongs to the SGF11 family. In terms of assembly, component of some SAGA transcription coactivator-HAT complexes, at least composed of Ada2b, not/nonstop, Pcaf/Gcn5, Sgf11 and Spt3. Within the SAGA complex, Sgf11, e(y)2, and not/nonstop form an additional subcomplex of SAGA called the DUB module (deubiquitination module). Interacts directly with not/nonstop. Interacts with the AMEX complex component xmas-2. Interacts with Cbp80; important for promoter recruitment of Sgf11 that is not associated with the DUB module.

It is found in the nucleus. It localises to the nucleoplasm. The protein localises to the cytoplasm. Functionally, component of the transcription regulatory histone acetylation (HAT) complex SAGA, a multiprotein complex that activates transcription by remodeling chromatin and mediating histone acetylation and deubiquitination. Within the SAGA complex, participates in a subcomplex that specifically deubiquitinates histone H2B. The SAGA complex is recruited to specific gene promoters by activators, where it is required for transcription. Required for nuclear receptor-mediated transactivation. Binds independently on SAGA to promoters in an RNA-dependent manner. Binds to mRNA and is essential for total mRNA export from the nucleus. Required to counteract heterochromatin silencing. Controls the development of neuronal connectivity in visual system by being required for accurate axon targeting in the optic lobe. Required for expression of ecdysone-induced genes such as br/broad. The polypeptide is SAGA-associated factor 11 homolog (Drosophila yakuba (Fruit fly)).